The following is a 78-amino-acid chain: Omega-conotoxin-like Ac6.5 (78 aa).

Positions 1–22 are cleaved as a signal peptide; that stretch reads MKLTCVVIVAVLLLTACQLLTA. Residues 23–42 constitute a propeptide that is removed on maturation; the sequence is DDSRGTQKHRSLRSTTKVSK. 3 disulfide bridges follow: Cys-46–Cys-62, Cys-53–Cys-65, and Cys-61–Cys-72. 4-hydroxyproline occurs at positions 55 and 67.

Belongs to the conotoxin O1 superfamily. Expressed by the venom duct.

The protein resides in the secreted. In terms of biological role, omega-conotoxins act at presynaptic membranes, they bind and block voltage-gated calcium channels (Cav). In Conus achatinus (Little frog cone), this protein is Omega-conotoxin-like Ac6.5.